Reading from the N-terminus, the 362-residue chain is NAD(P)H-quinone oxidoreductase subunit 1, chloroplastic (362 aa).

8 consecutive transmembrane segments (helical) span residues 27 to 47, 94 to 114, 128 to 148, 164 to 184, 202 to 222, 247 to 267, 303 to 323, and 335 to 355; these read IWILPILTLLLGITIEVLVIV, IPLFSIGPSIAVISILLSFLV, IGVFLWIAISSIAPIGLLMAG, AAQSISYEIPLTFCVLAISLL, FFGWNLWRQPIGFLVFLISSL, YSGIKYGLFYLVSYLNLLVSS, TMSIFITLTKAYLFLFISITI, and LLNLGWKFLLPISLGNLLLTT.

This sequence belongs to the complex I subunit 1 family. As to quaternary structure, NDH is composed of at least 16 different subunits, 5 of which are encoded in the nucleus.

It localises to the plastid. It is found in the chloroplast thylakoid membrane. It catalyses the reaction a plastoquinone + NADH + (n+1) H(+)(in) = a plastoquinol + NAD(+) + n H(+)(out). It carries out the reaction a plastoquinone + NADPH + (n+1) H(+)(in) = a plastoquinol + NADP(+) + n H(+)(out). Its function is as follows. NDH shuttles electrons from NAD(P)H:plastoquinone, via FMN and iron-sulfur (Fe-S) centers, to quinones in the photosynthetic chain and possibly in a chloroplast respiratory chain. The immediate electron acceptor for the enzyme in this species is believed to be plastoquinone. Couples the redox reaction to proton translocation, and thus conserves the redox energy in a proton gradient. This chain is NAD(P)H-quinone oxidoreductase subunit 1, chloroplastic (ndhA), found in Oryza sativa (Rice).